The following is a 265-amino-acid chain: NAD kinase 1 (265 aa).

Asp-45 serves as the catalytic Proton acceptor. Residues 45 to 46, His-50, 122 to 123, Arg-148, Asp-150, and Ala-185 each bind NAD(+); these read DG and NE.

This sequence belongs to the NAD kinase family. Requires a divalent metal cation as cofactor.

It is found in the cytoplasm. It carries out the reaction NAD(+) + ATP = ADP + NADP(+) + H(+). Its function is as follows. Involved in the regulation of the intracellular balance of NAD and NADP, and is a key enzyme in the biosynthesis of NADP. Catalyzes specifically the phosphorylation on 2'-hydroxyl of the adenosine moiety of NAD to yield NADP. In Halalkalibacterium halodurans (strain ATCC BAA-125 / DSM 18197 / FERM 7344 / JCM 9153 / C-125) (Bacillus halodurans), this protein is NAD kinase 1.